Consider the following 419-residue polypeptide: Dynein regulatory complex protein 9 (419 aa).

Disordered stretches follow at residues 25-45 (TGEP…EETS) and 394-419 (NFKM…RRKK). The segment covering 30-45 (EAAEEDLDYEEEEETS) has biased composition (acidic residues). The IQ domain maps to 372–401 (ELRSIVKLQAWWRGSVVRKEIGNFKMPKKD). The segment covering 394–413 (NFKMPKKDKDDSKDSKGKEK) has biased composition (basic and acidic residues).

Belongs to the DRC9 family. In terms of assembly, component of the nexin-dynein regulatory complex (N-DRC). Interacts (via IQ domain) with CALM when calcium levels are low. Does not interact with CALM in the presence of Ca(2+). Interacts with the HSP70 proteins HSPA1L and HSPA8. May form a complex with CAMK4 and HSP70. As to expression, expressed in the testes (at protein level). Also detected in oviduct (at protein level). Also detected in the trachea.

Its subcellular location is the cytoplasm. The protein resides in the cell projection. The protein localises to the cilium. It localises to the flagellum. It is found in the cytoskeleton. Its subcellular location is the flagellum axoneme. In terms of biological role, component of the nexin-dynein regulatory complex (N-DRC), a key regulator of ciliary/flagellar motility which maintains the alignment and integrity of the distal axoneme and regulates microtubule sliding in motile axonemes. Binds calmodulin when cellular Ca(2+) levels are low and thereby contributes to the regulation of calcium and calmodulin-dependent protein kinase IV (CAMK4) activity; contributes to the regulation of CAMK4 signaling cascades. Required for normal axoneme assembly in sperm flagella, normal sperm tail formation and for male fertility. The protein is Dynein regulatory complex protein 9 (Iqcg) of Mus musculus (Mouse).